The following is a 1252-amino-acid chain: DNA-directed RNA polymerase subunit beta (1252 aa).

This sequence belongs to the RNA polymerase beta chain family. As to quaternary structure, the RNAP catalytic core consists of 2 alpha, 1 beta, 1 beta' and 1 omega subunit. When a sigma factor is associated with the core the holoenzyme is formed, which can initiate transcription.

The enzyme catalyses RNA(n) + a ribonucleoside 5'-triphosphate = RNA(n+1) + diphosphate. Functionally, DNA-dependent RNA polymerase catalyzes the transcription of DNA into RNA using the four ribonucleoside triphosphates as substrates. The sequence is that of DNA-directed RNA polymerase subunit beta from Chlamydia felis (strain Fe/C-56) (Chlamydophila felis).